A 751-amino-acid polypeptide reads, in one-letter code: ABC transporter G family member 22 (751 aa).

Residues 26 to 81 (ADIRSPHGSMDANGVPATAPAAVGGGGTLSRKSSRRLMGMSPGRSSGAGTHIRKSR) are disordered. The region spanning 157 to 403 (LKFRDVTYKV…FSSIGCSPLI (247 aa)) is the ABC transporter domain. Residue 197–204 (GPSGSGKT) participates in ATP binding. The 210-residue stretch at 498-707 (EQYCILFCRG…TYKLLLKVQY (210 aa)) folds into the ABC transmembrane type-2 domain. The next 6 helical transmembrane spans lie at 516-536 (FSWL…LLWW), 552-572 (LLFF…IFAF), 602-622 (LPLD…MTGL), 634-654 (LTVF…GAIL), 666-686 (VTVM…PVFI), and 722-742 (GLTE…LAYL).

This sequence belongs to the ABC transporter superfamily. ABCG family. Eye pigment precursor importer (TC 3.A.1.204) subfamily.

It is found in the membrane. This chain is ABC transporter G family member 22 (ABCG22), found in Arabidopsis thaliana (Mouse-ear cress).